The chain runs to 362 residues: Oryzain gamma chain (362 aa).

The signal sequence occupies residues 1–24 (MAHRRIILLLAAAAVAATSAVAAA). A propeptide spans 25–144 (SSGFDDSNPI…GNHRMRDAAA (120 aa)) (activation peptide). A glycan (N-linked (GlcNAc...) asparagine) is linked at Asn128. 2 cysteine pairs are disulfide-bonded: Cys166/Cys209 and Cys200/Cys242. Cys169 is a catalytic residue. Asn258 carries an N-linked (GlcNAc...) asparagine glycan. A disulfide bond links Cys300 and Cys350. Active-site residues include His309 and Asn329.

This sequence belongs to the peptidase C1 family. In terms of tissue distribution, expressed only in seeds.

The chain is Oryzain gamma chain from Oryza sativa subsp. japonica (Rice).